Reading from the N-terminus, the 423-residue chain is 5-hydroxytryptamine receptor 1A-alpha (423 aa).

Over 1–47 (MDLRATSSNDSNATSGYSDTAAVDWDEGENATGSGSLPDPELSYQII) the chain is Extracellular. Asn-9, Asn-12, and Asn-30 each carry an N-linked (GlcNAc...) asparagine glycan. Residues 48 to 68 (TSLFLGALILCSIFGNSCVVA) traverse the membrane as a helical segment. The Cytoplasmic portion of the chain corresponds to 69 to 82 (AIALERSLQNVANY). Residues 83–107 (LIGSLAVTDLMVSVLVLPMAALYQV) form a helical membrane-spanning segment. Over 108–116 (LNKWTLGQD) the chain is Extracellular. The helical transmembrane segment at 117–141 (ICDLFIALDVLCCTSSILHLCAIAL) threads the bilayer. A disulfide bond links Cys-118 and Cys-196. Residues Asp-125 and Cys-129 each contribute to the serotonin site. Positions 142–144 (DRY) match the DRY motif; important for ligand-induced conformation changes motif. The Cytoplasmic portion of the chain corresponds to 142-161 (DRYWAITDPIDYVNKRTPRR). The chain crosses the membrane as a helical span at residues 162 to 183 (AAVLISVTWLIGFSISIPPMLG). Topologically, residues 184-202 (WRSAEDRANPDACIISQDP) are extracellular. The chain crosses the membrane as a helical span at residues 203-225 (GYTIYSTFGAFYIPLILMLVLYG). The Cytoplasmic segment spans residues 226–347 (RIFKAARFRI…LARERKTVKT (122 aa)). Residues 311 to 332 (LPLPNTPQSSSHENINEKTTGT) are disordered. The span at 316 to 329 (TPQSSSHENINEKT) shows a compositional bias: polar residues. 1D-myo-inositol 4-phosphate is bound by residues Ser-320, Lys-346, Thr-347, and Gly-353. Residues 348-371 (LGIIMGTFIFCWLPFFIVALVLPF) form a helical membrane-spanning segment. Topologically, residues 372–379 (CAENCYMP) are extracellular. Residues 380–404 (EWLGAVINWLGYSNSLLNPIIYAYF) traverse the membrane as a helical segment. The NPxxY motif; important for ligand-induced conformation changes and signaling signature appears at 397–401 (NPIIY). Phe-404, Asn-405, and Lys-406 together coordinate 1D-myo-inositol 4-phosphate. Over 405–423 (NKDFQSAFKKILRCKFHRH) the chain is Cytoplasmic.

It belongs to the G-protein coupled receptor 1 family. 5-hydroxytryptamine receptor subfamily.

Its subcellular location is the cell membrane. Its activity is regulated as follows. G-protein coupled receptor activity is regulated by lipids: phosphatidylinositol 4-phosphate increases HTR1A-mediated activity. In terms of biological role, G-protein coupled receptor for 5-hydroxytryptamine (serotonin). Also functions as a receptor for various drugs and psychoactive substances. Ligand binding causes a conformation change that triggers signaling via guanine nucleotide-binding proteins (G proteins) and modulates the activity of downstream effectors, such as adenylate cyclase. HTR1A is coupled to G(i)/G(o) G alpha proteins and mediates inhibitory neurotransmission: signaling inhibits adenylate cyclase activity and activates a phosphatidylinositol-calcium second messenger system that regulates the release of Ca(2+) ions from intracellular stores. Beta-arrestin family members regulate signaling by mediating both receptor desensitization and resensitization processes. This is 5-hydroxytryptamine receptor 1A-alpha (htr1aa) from Takifugu rubripes (Japanese pufferfish).